The primary structure comprises 180 residues: ATP-dependent Clp protease proteolytic subunit 2 (180 aa).

The Nucleophile role is filled by S86. H111 is an active-site residue.

Belongs to the peptidase S14 family. As to quaternary structure, fourteen ClpP subunits assemble into 2 heptameric rings which stack back to back to give a disk-like structure with a central cavity, resembling the structure of eukaryotic proteasomes.

Its subcellular location is the cytoplasm. The catalysed reaction is Hydrolysis of proteins to small peptides in the presence of ATP and magnesium. alpha-casein is the usual test substrate. In the absence of ATP, only oligopeptides shorter than five residues are hydrolyzed (such as succinyl-Leu-Tyr-|-NHMec, and Leu-Tyr-Leu-|-Tyr-Trp, in which cleavage of the -Tyr-|-Leu- and -Tyr-|-Trp bonds also occurs).. In terms of biological role, cleaves peptides in various proteins in a process that requires ATP hydrolysis. Has a chymotrypsin-like activity. Plays a major role in the degradation of misfolded proteins. This Tropheryma whipplei (strain Twist) (Whipple's bacillus) protein is ATP-dependent Clp protease proteolytic subunit 2.